A 675-amino-acid chain; its full sequence is G-protein-signaling modulator 1 (675 aa).

Residues 1–509 (MAGPAPPVAD…DLLTKFQSSR (509 aa)) are mediates association with membranes. TPR repeat units lie at residues 28–61 (CLEL…GTED), 66–99 (SAIY…ARTI), 106–139 (AKAS…AQEQ), 146–181 (ARAL…PPDV), 183–202 (ETLC…VKEL), 209–242 (GRAY…AKEF), 249–282 (RRAY…SRQL), 289–322 (AQAC…AQEL), and 329–362 (GRAC…SQEI). The segment at 364 to 487 (DRHGELTARM…VRVHVPRTSI (124 aa)) is interaction with STK11/LKB1. The segment at 391–412 (SEKPDLAGYEAQGARPKRTQRL) is disordered. S413 carries the post-translational modification Phosphoserine. Omega-N-methylarginine is present on R421. The span at 424 to 442 (LEREQNGDSHHSGDWRGPS) shows a compositional bias: basic and acidic residues. The tract at residues 424–492 (LEREQNGDSH…PRTSIPRAPS (69 aa)) is disordered. A phosphoserine mark is found at S445, S469, S471, S492, and S493. A compositionally biased stretch (basic and acidic residues) spans 454-469 (KYQEGPDAERRPREGS). A GoLoco 1 domain is found at 495–517 (EECFFDLLTKFQSSRMDDQRCPL). S545 and S569 each carry phosphoserine. GoLoco domains lie at 548 to 570 (TEEF…RASV), 596 to 618 (GDDF…RCPP), and 630 to 652 (DEDF…RVDL). 2 disordered regions span residues 610-630 (RIDD…TMPD) and 644-675 (RMDE…PGAS).

The protein belongs to the GPSM family. Interacts with GNAI1, GNAI2 and GNAI3 preferentially in their GDP-bound state. May also interact with GNAO1. Interacts with STK11/LKB1 and MACF1. Interacts with INSC/inscuteable and FRMPD1. Post-translationally, phosphorylation regulates interaction with G(i/o) alpha. Expressed in intestinal cells.

Its subcellular location is the cytoplasm. The protein resides in the cytosol. It is found in the endoplasmic reticulum membrane. The protein localises to the golgi apparatus membrane. It localises to the cell membrane. Guanine nucleotide dissociation inhibitor (GDI) which functions as a receptor-independent activator of heterotrimeric G-protein signaling. Keeps G(i/o) alpha subunit in its GDP-bound form thus uncoupling heterotrimeric G-proteins signaling from G protein-coupled receptors. Controls spindle orientation and asymmetric cell fate of cerebral cortical progenitors. May also be involved in macroautophagy in intestinal cells. May play a role in drug addiction. The polypeptide is G-protein-signaling modulator 1 (GPSM1) (Homo sapiens (Human)).